Consider the following 757-residue polypeptide: MTSNRSNLLFSLVLFHFLFVPTQLQALNTDGVLLLTFKYSILTDPLSVLRNWNYDDATPCLWTGVTCTELGKPNTPDMFRVTSLVLPNKHLLGSITPDLFSIPYLRILDLSSNFFNGSLPDSVFNATELQSISLGSNNLSGDLPKSVNSVTNLQLLNLSANAFTGEIPLNISLLKNLTVVSLSKNTFSGDIPSGFEAAQILDLSSNLLNGSLPKDLGGKSLHYLNLSHNKVLGEISPNFAEKFPANATVDLSFNNLTGPIPSSLSLLNQKAESFSGNQELCGKPLKILCSIPSTLSNPPNISETTSPAIAVKPRSTAPINPLTEKPNQTGKSKLKPSTIAAITVADIVGLAFIGLLVLYVYQVRKRRRYPESSKFSFFKFCLEKNEAKKSKPSTTEVTVPESPEAKTTCGSCIILTGGRYDETSTSESDVENQQTVQAFTRTDGGQLKQSSQTQLVTVDGETRLDLDTLLKASAYILGTTGTGIVYKAVLENGTAFAVRRIETESCAAAKPKEFEREVRAIAKLRHPNLVRIRGFCWGDDEKLLISDYVPNGSLLCFFTATKASSSSSSSSSLQNPLTFEARLKIARGMARGLSYINEKKQVHGNIKPNNILLNAENEPIITDLGLDRLMTPARESHTTGPTSSSPYQPPEWSTSLKPNPKWDVYSFGVILLELLTSKVFSVDHDIDQFSNLSDSAAEENGRFLRLIDGAIRSDVARHEDAAMACFRLGIECVSSLPQKRPSMKELVQVLEKICVLV.

The first 26 residues, 1–26 (MTSNRSNLLFSLVLFHFLFVPTQLQA), serve as a signal peptide directing secretion. LRR repeat units follow at residues 104–126 (YLRILDLSSNFFNGSLPDSVFNA), 128–150 (ELQSISLGSNNLSGDLPKSVNSV), 152–174 (NLQLLNLSANAFTGEIPLNISLL), 176–198 (NLTVVSLSKNTFSGDIPSGFEAA), 199–219 (QILDLSSNLLNGSLPKDLGGK), 220–242 (SLHYLNLSHNKVLGEISPNFAEK), and 245–267 (ANATVDLSFNNLTGPIPSSLSLL). A helical transmembrane segment spans residues 339-359 (IAAITVADIVGLAFIGLLVLY). A Protein kinase domain is found at 471–753 (KASAYILGTT…KELVQVLEKI (283 aa)). Residue S473 is modified to Phosphoserine. T494 is modified (phosphothreonine). Position 553 is a phosphoserine (S553). Residues 633 to 654 (ARESHTTGPTSSSPYQPPEWST) form a disordered region. Residues T638 and T639 each carry the phosphothreonine modification. Polar residues predominate over residues 638 to 654 (TTGPTSSSPYQPPEWST).

Belongs to the protein kinase superfamily.

The protein localises to the membrane. This chain is Receptor protein kinase-like protein At4g34220, found in Arabidopsis thaliana (Mouse-ear cress).